A 197-amino-acid polypeptide reads, in one-letter code: Xanthine phosphoribosyltransferase (197 aa).

Xanthine-binding residues include L20 and N27. 128 to 132 (ANGQA) contributes to the 5-phospho-alpha-D-ribose 1-diphosphate binding site. K156 is a xanthine binding site.

The protein belongs to the purine/pyrimidine phosphoribosyltransferase family. Xpt subfamily. As to quaternary structure, homodimer.

It localises to the cytoplasm. It catalyses the reaction XMP + diphosphate = xanthine + 5-phospho-alpha-D-ribose 1-diphosphate. It functions in the pathway purine metabolism; XMP biosynthesis via salvage pathway; XMP from xanthine: step 1/1. Functionally, converts the preformed base xanthine, a product of nucleic acid breakdown, to xanthosine 5'-monophosphate (XMP), so it can be reused for RNA or DNA synthesis. The chain is Xanthine phosphoribosyltransferase from Bacillus cereus (strain ATCC 10987 / NRS 248).